The sequence spans 225 residues: Small ribosomal subunit protein uS5 (225 aa).

An S5 DRBM domain is found at 57-120 (LEEQVLDVKL…AQAKLSLIKV (64 aa)).

Belongs to the universal ribosomal protein uS5 family. In terms of assembly, part of the 30S ribosomal subunit. Contacts protein S4.

In terms of biological role, with S4 and S12 plays an important role in translational accuracy. The polypeptide is Small ribosomal subunit protein uS5 (Methanococcus vannielii (strain ATCC 35089 / DSM 1224 / JCM 13029 / OCM 148 / SB)).